The primary structure comprises 506 residues: Procardosin-B (506 aa).

Positions 1–24 are cleaved as a signal peptide; sequence MGTPIKASLLALFLFFLLSPTAFS. Residues 25–70 constitute a propeptide that is removed on maturation; sequence VSNGGLLRVGLKKRKVDRLDQLRAHGVHMLGNARKDFGFRRTLSDS. In terms of domain architecture, Peptidase A1 spans 85-503; it reads YYGEIGIGTP…DYGKLRVGFA (419 aa). Asp103 is a catalytic residue. A disulfide bridge links Cys116 with Cys122. Asn139 and Asn252 each carry an N-linked (GlcNAc...) asparagine glycan. Cys281 and Cys285 are disulfide-bonded. Asp290 is a catalytic residue. The Saposin B-type domain occupies 315–417; sequence VLNQQCKTLV…NEVCDQLPTS (103 aa). Cystine bridges form between Cys320/Cys411, Cys345/Cys383, Cys351/Cys380, and Cys425/Cys462. The N-linked (GlcNAc...) asparagine glycan is linked to Asn397.

It belongs to the peptidase A1 family. As to quaternary structure, heterodimer of a light chain and a heavy chain. An intermediate form is produced first, and undergoes proteolytic processing to remove the internal plant-specific insert (PSI) and the propeptide. In terms of tissue distribution, detected in pistils, but not in seeds, bracts, midribs, roots, leaves or stamen extracts. Detected in seeds. In stigmas and styles, detected in the transmitting tissue and in contiguous subepidermal layers at the longitudenal grooves of the stigma (at protein level).

The protein localises to the microsome membrane. It localises to the protein storage vacuole. The protein resides in the secreted. It is found in the cell wall. Its subcellular location is the extracellular space. The protein localises to the extracellular matrix. Inhibited by the specific aspartic proteinase inhibitors diazoacetyl-noleucine methyl ester and pepstatin. Its function is as follows. Aspartic protease. Cleaves alpha-lactalbumin but not beta-lactoglobulin. This chain is Procardosin-B, found in Cynara cardunculus (Cardoon).